The chain runs to 238 residues: Ribosomal RNA small subunit methyltransferase G (238 aa).

Residues G78, F83, 129 to 130 (AE), and R148 contribute to the S-adenosyl-L-methionine site. The disordered stretch occupies residues 217-238 (KKKETPKKYPRKAGTPAKSPIK).

The protein belongs to the methyltransferase superfamily. RNA methyltransferase RsmG family.

It is found in the cytoplasm. In terms of biological role, specifically methylates the N7 position of a guanine in 16S rRNA. This Lactococcus lactis subsp. cremoris (strain SK11) protein is Ribosomal RNA small subunit methyltransferase G.